The primary structure comprises 207 residues: Uracil phosphoribosyltransferase (207 aa).

Residues R77, R102, and 129–137 (DPMLATGGS) contribute to the 5-phospho-alpha-D-ribose 1-diphosphate site. Uracil-binding positions include I192 and 197-199 (GDA). Position 198 (D198) interacts with 5-phospho-alpha-D-ribose 1-diphosphate.

The protein belongs to the UPRTase family. The cofactor is Mg(2+).

It catalyses the reaction UMP + diphosphate = 5-phospho-alpha-D-ribose 1-diphosphate + uracil. The protein operates within pyrimidine metabolism; UMP biosynthesis via salvage pathway; UMP from uracil: step 1/1. With respect to regulation, allosterically activated by GTP. Functionally, catalyzes the conversion of uracil and 5-phospho-alpha-D-ribose 1-diphosphate (PRPP) to UMP and diphosphate. The polypeptide is Uracil phosphoribosyltransferase (Mesoplasma florum (strain ATCC 33453 / NBRC 100688 / NCTC 11704 / L1) (Acholeplasma florum)).